The following is a 416-amino-acid chain: Phosphoglycerate kinase (416 aa).

Residue S2 is modified to N-acetylserine. The (2R)-3-phosphoglycerate site is built by V23, D24, F25, N26, Q38, R39, S62, H63, G65, and R66. A Glycyl lysine isopeptide (Lys-Gly) (interchain with G-Cter in ubiquitin) cross-link involves residue K82. T93 is modified (phosphothreonine). S110 bears the Phosphoserine mark. Positions 121 and 122 each coordinate (2R)-3-phosphoglycerate. 2 positions are modified to phosphoserine: S130 and S154. The (2R)-3-phosphoglycerate site is built by H168 and R169. At S172 the chain carries Phosphoserine. Residue K197 forms a Glycyl lysine isopeptide (Lys-Gly) (interchain with G-Cter in ubiquitin) linkage. Phosphothreonine is present on T203. ADP is bound at residue G212. G212 provides a ligand contact to CDP. Positions 213 and 214 each coordinate AMP. The ATP site is built by A213 and K214. A213 serves as a coordination point for Mg(2+). Residues A216 and D217 each coordinate Mg(2+). CDP is bound at residue D217. Position 218 (K218) interacts with AMP. Residue K218 coordinates ATP. Residue G236 coordinates ADP. G236 contributes to the CDP binding site. Residue G237 participates in AMP binding. G237 contributes to the ATP binding site. T241 is modified (phosphothreonine). Residues K258 and K274 each participate in a glycyl lysine isopeptide (Lys-Gly) (interchain with G-Cter in ubiquitin) cross-link. At T298 the chain carries Phosphothreonine. K302 participates in a covalent cross-link: Glycyl lysine isopeptide (Lys-Gly) (interchain with G-Cter in ubiquitin). G311 contacts AMP. The ATP site is built by G311 and L312. S318 is subject to Phosphoserine. A Phosphothreonine modification is found at T331. N335 provides a ligand contact to ATP. CDP-binding residues include G336 and F341. F341 serves as a coordination point for ADP. E342 contributes to the AMP binding site. E342 provides a ligand contact to ATP. G371 contributes to the (2R)-3-phosphoglycerate binding site. D373 and T374 together coordinate ATP. D373 lines the Mg(2+) pocket. The residue at position 392 (T392) is a Phosphothreonine. Positions 394 and 395 each coordinate (2R)-3-phosphoglycerate.

It belongs to the phosphoglycerate kinase family. Monomer. Requires Mg(2+) as cofactor.

The protein resides in the cytoplasm. It localises to the mitochondrion. The catalysed reaction is (2R)-3-phosphoglycerate + ATP = (2R)-3-phospho-glyceroyl phosphate + ADP. Its pathway is carbohydrate degradation; glycolysis; pyruvate from D-glyceraldehyde 3-phosphate: step 2/5. Functionally, catalyzes one of the two ATP producing reactions in the glycolytic pathway via the reversible conversion of 1,3-diphosphoglycerate to 3-phosphoglycerate. Both L- and D- forms of purine and pyrimidine nucleotides can be used as substrates, but the activity is much lower on pyrimidines. Negatively regulates the biosynthesis of acetyl-CoA from pyruvate in the mitochondrion. The polypeptide is Phosphoglycerate kinase (PGK1) (Saccharomyces cerevisiae (strain ATCC 204508 / S288c) (Baker's yeast)).